Here is a 277-residue protein sequence, read N- to C-terminus: Caspase-3 (277 aa).

M1 carries the N-acetylmethionine modification. Propeptides lie at residues 1–9 and 10–28; these read MENNKTSVD and SKSINNFEVKTIHGSKSVD. K11 carries the post-translational modification N6-acetyllysine. The residue at position 26 (S26) is a Phosphoserine. Active-site residues include H121 and C163. C163 is modified (S-nitrosocysteine; in inhibited form).

Belongs to the peptidase C14A family. In terms of assembly, heterotetramer that consists of two anti-parallel arranged heterodimers, each one formed by a 17 kDa (p17) and a 12 kDa (p12) subunit. Interacts with BIRC6/bruce. Post-translationally, cleavage by granzyme B, caspase-6, caspase-8 and caspase-10 generates the two active subunits. Additional processing of the propeptides is likely due to the autocatalytic activity of the activated protease. Active heterodimers between the small subunit of caspase-7 protease and the large subunit of caspase-3 also occur and vice versa. S-nitrosylated on its catalytic site cysteine in unstimulated cell lines and denitrosylated upon activation of the Fas apoptotic pathway, associated with an increase in intracellular caspase activity. Fas therefore activates caspase-3 not only by inducing the cleavage of the caspase zymogen to its active subunits, but also by stimulating the denitrosylation of its active site thiol. In terms of processing, ubiquitinated by BIRC6; this activity is inhibited by DIABLO/SMAC. Highest expression in spleen, lung, liver, kidney and heart. Lower expression in brain, skeletal muscle and testis.

It localises to the cytoplasm. The catalysed reaction is Strict requirement for an Asp residue at positions P1 and P4. It has a preferred cleavage sequence of Asp-Xaa-Xaa-Asp-|- with a hydrophobic amino-acid residue at P2 and a hydrophilic amino-acid residue at P3, although Val or Ala are also accepted at this position.. Its activity is regulated as follows. Inhibited by BIRC6; following inhibition of BIRC6-caspase binding by DIABLO/SMAC, BIRC6 is subjected to caspase cleavage, leading to an increase in active caspases. Its function is as follows. Thiol protease that acts as a major effector caspase involved in the execution phase of apoptosis. Following cleavage and activation by initiator caspases (CASP8, CASP9 and/or CASP10), mediates execution of apoptosis by catalyzing cleavage of many proteins. At the onset of apoptosis, it proteolytically cleaves poly(ADP-ribose) polymerase PARP1 at a '216-Asp-|-Gly-217' bond. Cleaves and activates sterol regulatory element binding proteins (SREBPs) between the basic helix-loop-helix leucine zipper domain and the membrane attachment domain. Cleaves and activates caspase-6, -7 and -9 (CASP6, CASP7 and CASP9, respectively). Cleaves and inactivates interleukin-18 (IL18). Triggers cell adhesion in sympathetic neurons through RET cleavage. Cleaves IL-1 beta between an Asp and an Ala, releasing the mature cytokine which is involved in a variety of inflammatory processes. Cleaves and inhibits serine/threonine-protein kinase AKT1 in response to oxidative stress. Acts as an inhibitor of type I interferon production during virus-induced apoptosis by mediating cleavage of antiviral proteins CGAS, IRF3 and MAVS, thereby preventing cytokine overproduction. Also involved in pyroptosis by mediating cleavage and activation of gasdermin-E (GSDME). Cleaves XRCC4 and phospholipid scramblase proteins XKR4, XKR8 and XKR9, leading to promote phosphatidylserine exposure on apoptotic cell surface. Cleaves BIRC6 following inhibition of BIRC6-caspase binding by DIABLO/SMAC. The chain is Caspase-3 (Casp3) from Mus musculus (Mouse).